A 254-amino-acid polypeptide reads, in one-letter code: Imidazole glycerol phosphate synthase subunit HisF (254 aa).

Catalysis depends on residues D11 and D130.

It belongs to the HisA/HisF family. In terms of assembly, heterodimer of HisH and HisF.

It is found in the cytoplasm. The catalysed reaction is 5-[(5-phospho-1-deoxy-D-ribulos-1-ylimino)methylamino]-1-(5-phospho-beta-D-ribosyl)imidazole-4-carboxamide + L-glutamine = D-erythro-1-(imidazol-4-yl)glycerol 3-phosphate + 5-amino-1-(5-phospho-beta-D-ribosyl)imidazole-4-carboxamide + L-glutamate + H(+). Its pathway is amino-acid biosynthesis; L-histidine biosynthesis; L-histidine from 5-phospho-alpha-D-ribose 1-diphosphate: step 5/9. Its function is as follows. IGPS catalyzes the conversion of PRFAR and glutamine to IGP, AICAR and glutamate. The HisF subunit catalyzes the cyclization activity that produces IGP and AICAR from PRFAR using the ammonia provided by the HisH subunit. The sequence is that of Imidazole glycerol phosphate synthase subunit HisF from Microcystis aeruginosa (strain NIES-843 / IAM M-2473).